Consider the following 274-residue polypeptide: 4-diphosphocytidyl-2-C-methyl-D-erythritol kinase (274 aa).

Lys-8 is an active-site residue. 94 to 104 serves as a coordination point for ATP; the sequence is PSGAGLGGGSA. The active site involves Asp-136.

Belongs to the GHMP kinase family. IspE subfamily.

The enzyme catalyses 4-CDP-2-C-methyl-D-erythritol + ATP = 4-CDP-2-C-methyl-D-erythritol 2-phosphate + ADP + H(+). The protein operates within isoprenoid biosynthesis; isopentenyl diphosphate biosynthesis via DXP pathway; isopentenyl diphosphate from 1-deoxy-D-xylulose 5-phosphate: step 3/6. Catalyzes the phosphorylation of the position 2 hydroxy group of 4-diphosphocytidyl-2C-methyl-D-erythritol. This is 4-diphosphocytidyl-2-C-methyl-D-erythritol kinase from Bacteroides fragilis (strain ATCC 25285 / DSM 2151 / CCUG 4856 / JCM 11019 / LMG 10263 / NCTC 9343 / Onslow / VPI 2553 / EN-2).